The chain runs to 729 residues: Sodium-dependent neutral amino acid transporter B(0)AT2 (729 aa).

Residues 1–69 (MPKNSKVVKR…ERPAWNSKLQ (69 aa)) lie on the Cytoplasmic side of the membrane. A phosphoserine mark is found at S25 and S55. 3 helical membrane passes run 70-90 (YILAQVGFSVGLGNVWRFPYL), 98-117 (AYLLPYLILLLVIGIPLFFL), and 142-162 (GIGFASCVVCYFVALYYNVII). At 163-225 (GWTLFYFSQS…SSISESGGLN (63 aa)) the chain is on the extracellular side. N-linked (GlcNAc...) asparagine glycosylation is present at N187. 4 helical membrane passes run 226–244 (WKMTGCLLAAWVMVCLAMI), 253–270 (IMYFSSLFPYVVLICFLI), 306–323 (VFFALGLGFGGVIAFSSY), and 335–356 (VLVSFINFFTSVLATLVVFAVL). Residues 357–452 (GFKANIVNEK…FIAFTEAMTH (96 aa)) are Extracellular-facing. Residues N383 and N394 are each glycosylated (N-linked (GlcNAc...) asparagine). Helical transmembrane passes span 453-472 (FPASPFWSVMFFLMLINLGL), 496-514 (ILTVICCLLAFCIGLMFVQ), 530-550 (TLPLLIVVILENIAVSFVYGI), 571-592 (YMWKYISPLMLVTLLIASIVNM), and 620-642 (VVCFSLMVLAILPVPVVFVIRRC). The Cytoplasmic segment spans residues 643 to 729 (NLIDDSSGNL…DMPDMPESDL (87 aa)). A phosphoserine mark is found at S687, S699, and S701.

This sequence belongs to the sodium:neurotransmitter symporter (SNF) (TC 2.A.22) family. SLC6A15 subfamily. As to expression, widely distributed in the central nervous system, including the olfactory bulb, the hypothalamus, the cerebral cortex, the hippocampus, and the cerebellum. In addition, intense expression is found in the motor nuclei including the oculomotor nucleus, abducens nucleus, trigeminal motor nucleus, facial nucleus, hypoglossal nucleus and ventral horn of spinal cord. Intense hybridization signals are also observed in the nuclei containing monoaminergic neurons, such as locus coeruleus, the substantia nigra pars compacta, the ventral tegmental area, the dorsal raphe nucleus and the median raphe nucleus.

It localises to the membrane. The catalysed reaction is L-leucine(in) + Na(+)(in) = L-leucine(out) + Na(+)(out). The enzyme catalyses L-isoleucine(in) + Na(+)(in) = L-isoleucine(out) + Na(+)(out). It carries out the reaction L-methionine(in) + Na(+)(in) = L-methionine(out) + Na(+)(out). It catalyses the reaction L-proline(in) + Na(+)(in) = L-proline(out) + Na(+)(out). The catalysed reaction is L-alanine(in) + Na(+)(in) = L-alanine(out) + Na(+)(out). The enzyme catalyses L-asparagine(in) + Na(+)(in) = L-asparagine(out) + Na(+)(out). It carries out the reaction L-valine(in) + Na(+)(in) = L-valine(out) + Na(+)(out). It catalyses the reaction L-cysteine(in) + Na(+)(in) = L-cysteine(out) + Na(+)(out). The catalysed reaction is L-glutamine(in) + Na(+)(in) = L-glutamine(out) + Na(+)(out). The enzyme catalyses L-serine(in) + Na(+)(in) = L-serine(out) + Na(+)(out). It carries out the reaction L-threonine(in) + Na(+)(in) = L-threonine(out) + Na(+)(out). It catalyses the reaction L-pipecolate(in) + Na(+)(in) = L-pipecolate(out) + Na(+)(out). The catalysed reaction is L-phenylalanine(in) + Na(+)(in) = L-phenylalanine(out) + Na(+)(out). Functions as a sodium-dependent neutral amino acid transporter. Exhibits preference for the branched-chain amino acids, particularly leucine, valine and isoleucine and methionine. Can also transport low-affinity substrates such as alanine, phenylalanine, glutamine and pipecolic acid. Mediates the saturable, pH-sensitive and electrogenic cotransport of proline and sodium ions with a stoichiometry of 1:1. May have a role as transporter for neurotransmitter precursors into neurons. In contrast to other members of the neurotransmitter transporter family, does not appear to be chloride-dependent. In Rattus norvegicus (Rat), this protein is Sodium-dependent neutral amino acid transporter B(0)AT2 (Slc6a15).